The following is a 1012-amino-acid chain: Vacuolar membrane protease (1012 aa).

Topologically, residues 1–60 (MRRSTDPRNLLVRRGPLLVDGESAISELDPGFFPTGDAPKMSSTTRRRFNLIAFTPGPVT) are cytoplasmic. A helical membrane pass occupies residues 61–81 (VISSLVYLALLIPLLLVHTIV). The Vacuolar portion of the chain corresponds to 82-432 (PSAPKSNPKG…SFAVFRLHTL (351 aa)). The N-linked (GlcNAc...) asparagine glycan is linked to N159. Residues H215 and D227 each coordinate Zn(2+). The active-site Proton acceptor is E261. Residues E262, E287, and H360 each coordinate Zn(2+). A helical transmembrane segment spans residues 433-453 (FAISVTLLVVCPIVLFVIGII). The Cytoplasmic segment spans residues 454-487 (LSKMDKMYLFSIHETIPETKEKVSVRGLRGLFRY). The helical transmembrane segment at 488–508 (PIILVVSSGILIGLSYLLAKV) threads the bilayer. The Vacuolar segment spans residues 509–518 (NPFIVHSSSY). The helical transmembrane segment at 519–539 (AVWSMMLSSWIFMTWFLSCIA) threads the bilayer. The Cytoplasmic segment spans residues 540 to 550 (DFFRPSALHRA). The chain crosses the membrane as a helical span at residues 551-571 (YTFTWQLLVMWVLLVISTVYV). Residues 572–575 (NQHD) lie on the Vacuolar side of the membrane. A helical transmembrane segment spans residues 576 to 596 (IAAGYFIVFYFAGTFLATLIS). Over 597-710 (YLELFALPNK…WSASLPTWTW (114 aa)) the chain is Cytoplasmic. Positions 614 to 629 (SQYPSRLGSNRSSRIL) are enriched in polar residues. The tract at residues 614-660 (SQYPSRLGSNRSSRILSPSADELPTGGDNNGEIYDGEEEPTESSSLL) is disordered. A helical membrane pass occupies residues 711–731 (VLQFLFVGPVVIMFIGQLGLF). Residues 732-743 (LTSAMNQVGADG) lie on the Vacuolar side of the membrane. Residues 744–764 (VGLLVVYIAIAVFSVLLLIPL) form a helical membrane-spanning segment. The Cytoplasmic segment spans residues 765–777 (SPFIHRFTYHVPT). The chain crosses the membrane as a helical span at residues 778–798 (FLLLVFIATLIYNLAAFPFSA). Residues 799–1012 (ENRLKIFFVQ…DGLVEVSRGF (214 aa)) are Vacuolar-facing. N-linked (GlcNAc...) asparagine glycans are attached at residues N842 and N878.

It belongs to the peptidase M28 family. Zn(2+) serves as cofactor.

It localises to the vacuole membrane. Functionally, may be involved in vacuolar sorting and osmoregulation. The protein is Vacuolar membrane protease of Coccidioides posadasii (strain RMSCC 757 / Silveira) (Valley fever fungus).